Consider the following 291-residue polypeptide: Glycine--tRNA ligase alpha subunit (291 aa).

It belongs to the class-II aminoacyl-tRNA synthetase family. Tetramer of two alpha and two beta subunits.

It localises to the cytoplasm. The enzyme catalyses tRNA(Gly) + glycine + ATP = glycyl-tRNA(Gly) + AMP + diphosphate. The sequence is that of Glycine--tRNA ligase alpha subunit from Geotalea uraniireducens (strain Rf4) (Geobacter uraniireducens).